We begin with the raw amino-acid sequence, 393 residues long: Isocitrate dehydrogenase [NADP] (393 aa).

Residues Ser102, Asn104, Arg108, Arg118, and Arg142 each coordinate D-threo-isocitrate. Asp283 lines the Mg(2+) pocket.

It belongs to the isocitrate and isopropylmalate dehydrogenases family. Homodimer. It depends on Mg(2+) as a cofactor. The cofactor is Mn(2+).

It catalyses the reaction D-threo-isocitrate + NADP(+) = 2-oxoglutarate + CO2 + NADPH. In terms of biological role, catalyzes the oxidative decarboxylation of isocitrate to 2-oxoglutarate and carbon dioxide with the concomitant reduction of NADP(+). This chain is Isocitrate dehydrogenase [NADP] (icd), found in Streptococcus mutans serotype c (strain ATCC 700610 / UA159).